Reading from the N-terminus, the 242-residue chain is Zinc import ATP-binding protein ZnuC (242 aa).

Residues 24–241 enclose the ABC transporter domain; the sequence is INVKNLSFFY…EKFLKMFSSY (218 aa). 56–63 contributes to the ATP binding site; that stretch reads GPNGGGKT.

It belongs to the ABC transporter superfamily. Zinc importer (TC 3.A.1.15.5) family. The complex is composed of two ATP-binding proteins (ZnuC), two transmembrane proteins (ZnuB) and a solute-binding protein (ZnuA).

It is found in the cell inner membrane. It carries out the reaction Zn(2+)(out) + ATP(in) + H2O(in) = Zn(2+)(in) + ADP(in) + phosphate(in) + H(+)(in). Functionally, part of the ABC transporter complex ZnuABC involved in zinc import. Responsible for energy coupling to the transport system. This is Zinc import ATP-binding protein ZnuC from Ehrlichia canis (strain Jake).